Here is a 154-residue protein sequence, read N- to C-terminus: SsrA-binding protein (154 aa).

It belongs to the SmpB family.

It is found in the cytoplasm. Functionally, required for rescue of stalled ribosomes mediated by trans-translation. Binds to transfer-messenger RNA (tmRNA), required for stable association of tmRNA with ribosomes. tmRNA and SmpB together mimic tRNA shape, replacing the anticodon stem-loop with SmpB. tmRNA is encoded by the ssrA gene; the 2 termini fold to resemble tRNA(Ala) and it encodes a 'tag peptide', a short internal open reading frame. During trans-translation Ala-aminoacylated tmRNA acts like a tRNA, entering the A-site of stalled ribosomes, displacing the stalled mRNA. The ribosome then switches to translate the ORF on the tmRNA; the nascent peptide is terminated with the 'tag peptide' encoded by the tmRNA and targeted for degradation. The ribosome is freed to recommence translation, which seems to be the essential function of trans-translation. This is SsrA-binding protein from Ruminiclostridium cellulolyticum (strain ATCC 35319 / DSM 5812 / JCM 6584 / H10) (Clostridium cellulolyticum).